We begin with the raw amino-acid sequence, 115 residues long: Large ribosomal subunit protein uL24 (115 aa).

The protein belongs to the universal ribosomal protein uL24 family. As to quaternary structure, part of the 50S ribosomal subunit.

One of two assembly initiator proteins, it binds directly to the 5'-end of the 23S rRNA, where it nucleates assembly of the 50S subunit. In terms of biological role, one of the proteins that surrounds the polypeptide exit tunnel on the outside of the subunit. The polypeptide is Large ribosomal subunit protein uL24 (Beutenbergia cavernae (strain ATCC BAA-8 / DSM 12333 / CCUG 43141 / JCM 11478 / NBRC 16432 / NCIMB 13614 / HKI 0122)).